The primary structure comprises 411 residues: MAQCVRSTLNPVRTPQSFTRKAYVKSPAFASVSFLRAVPEFNKYPKPCSLVMSCQGKAQNQQEERPQLSLDDLVTSNRKGEVLGTIKDSLSNCLSETNLLATVPGLKSRIKGKVRDIYDAGDYLVLITTDRLSAFDRNLASIPFKGQVLNETSLWWFNNTQHITPNAIVSSPDRNVVIAKKCSVFPIEFVVRGYVTGSTDTSLWTVYNKGVRNYCGNELSDGLVKNQKLPANILTPTTKAADHDVPISPNEIVEGGFMTQAEFDEASMKALSLFEFGQGVAKKHGLILVDTKYEFGRSSDGSILLIDEIHTPDSSRYWLAGSYEERFQKGLEPENVDKEFLRLWFKENCNPYEDEVLPAAPAELVTELAWRYIFLYETITGSRIDIIPTQEPIHDRISRNTSQALSSLRQL.

The transit peptide at Met1–Ser53 directs the protein to the chloroplast.

The protein belongs to the SAICAR synthetase family.

The protein resides in the plastid. It is found in the chloroplast. It carries out the reaction 5-amino-1-(5-phospho-D-ribosyl)imidazole-4-carboxylate + L-aspartate + ATP = (2S)-2-[5-amino-1-(5-phospho-beta-D-ribosyl)imidazole-4-carboxamido]succinate + ADP + phosphate + 2 H(+). The protein operates within purine metabolism; IMP biosynthesis via de novo pathway; 5-amino-1-(5-phospho-D-ribosyl)imidazole-4-carboxamide from 5-amino-1-(5-phospho-D-ribosyl)imidazole-4-carboxylate: step 1/2. The chain is Phosphoribosylaminoimidazole-succinocarboxamide synthase, chloroplastic (PUR7) from Arabidopsis thaliana (Mouse-ear cress).